Here is a 155-residue protein sequence, read N- to C-terminus: SsrA-binding protein (155 aa).

Belongs to the SmpB family.

The protein localises to the cytoplasm. Functionally, required for rescue of stalled ribosomes mediated by trans-translation. Binds to transfer-messenger RNA (tmRNA), required for stable association of tmRNA with ribosomes. tmRNA and SmpB together mimic tRNA shape, replacing the anticodon stem-loop with SmpB. tmRNA is encoded by the ssrA gene; the 2 termini fold to resemble tRNA(Ala) and it encodes a 'tag peptide', a short internal open reading frame. During trans-translation Ala-aminoacylated tmRNA acts like a tRNA, entering the A-site of stalled ribosomes, displacing the stalled mRNA. The ribosome then switches to translate the ORF on the tmRNA; the nascent peptide is terminated with the 'tag peptide' encoded by the tmRNA and targeted for degradation. The ribosome is freed to recommence translation, which seems to be the essential function of trans-translation. This is SsrA-binding protein from Streptococcus equi subsp. equi (strain 4047).